Consider the following 156-residue polypeptide: Aspartate carbamoyltransferase regulatory chain (156 aa).

4 residues coordinate Zn(2+): C109, C114, C138, and C141.

Belongs to the PyrI family. As to quaternary structure, contains catalytic and regulatory chains. Zn(2+) is required as a cofactor.

In terms of biological role, involved in allosteric regulation of aspartate carbamoyltransferase. This Baumannia cicadellinicola subsp. Homalodisca coagulata protein is Aspartate carbamoyltransferase regulatory chain.